The following is a 228-amino-acid chain: Protein ULTRAPETALA 2 (228 aa).

Residues 14–121 (EELQEISGVH…NKALKNSNVS (108 aa)) form the SAND domain.

Expressed in influorescence, pollen and siliques, with a higher expression in influorescence.

It localises to the cytoplasm. It is found in the nucleus. Putative transcription factor that acts as a key negative regulator of cell accumulation in shoot and floral meristems. Negatively regulates the size of the WUSCHEL (WUS)-expressing organizing center in inflorescence meristems. May act by down-regulating expression of WUS. Can compensate for mutant ULT1 protein when overexpressed. This chain is Protein ULTRAPETALA 2 (ULT2), found in Arabidopsis thaliana (Mouse-ear cress).